The sequence spans 369 residues: Protein-glutamate methylesterase/protein-glutamine glutaminase 1 (369 aa).

In terms of domain architecture, Response regulatory spans 3–120; that stretch reads KVVVVDDSAF…SLDIVKIEKD (118 aa). Residue D54 is modified to 4-aspartylphosphate. Over residues 136–168 the composition is skewed to low complexity; the sequence is RSFRPAPAVRPAAPAALRATPRPSAAPSSAASS. The tract at residues 136 to 174 is disordered; the sequence is RSFRPAPAVRPAAPAALRATPRPSAAPSSAASSTGTLQV. The CheB-type methylesterase domain maps to 177–369; the sequence is GKPVRDVVAI…AQAIMNAVYK (193 aa). Residues S189, H216, and D312 contribute to the active site.

Belongs to the CheB family. Phosphorylated by CheA. Phosphorylation of the N-terminal regulatory domain activates the methylesterase activity.

The protein resides in the cytoplasm. It carries out the reaction [protein]-L-glutamate 5-O-methyl ester + H2O = L-glutamyl-[protein] + methanol + H(+). The catalysed reaction is L-glutaminyl-[protein] + H2O = L-glutamyl-[protein] + NH4(+). Functionally, involved in chemotaxis. Part of a chemotaxis signal transduction system that modulates chemotaxis in response to various stimuli. Catalyzes the demethylation of specific methylglutamate residues introduced into the chemoreceptors (methyl-accepting chemotaxis proteins or MCP) by CheR. Also mediates the irreversible deamidation of specific glutamine residues to glutamic acid. The sequence is that of Protein-glutamate methylesterase/protein-glutamine glutaminase 1 from Oleidesulfovibrio alaskensis (strain ATCC BAA-1058 / DSM 17464 / G20) (Desulfovibrio alaskensis).